We begin with the raw amino-acid sequence, 142 residues long: Large ribosomal subunit protein uL11 (142 aa).

Belongs to the universal ribosomal protein uL11 family. Part of the ribosomal stalk of the 50S ribosomal subunit. Interacts with L10 and the large rRNA to form the base of the stalk. L10 forms an elongated spine to which L12 dimers bind in a sequential fashion forming a multimeric L10(L12)X complex. One or more lysine residues are methylated.

Its function is as follows. Forms part of the ribosomal stalk which helps the ribosome interact with GTP-bound translation factors. This Methylocella silvestris (strain DSM 15510 / CIP 108128 / LMG 27833 / NCIMB 13906 / BL2) protein is Large ribosomal subunit protein uL11.